A 315-amino-acid polypeptide reads, in one-letter code: Transaldolase (315 aa).

Lys-125 functions as the Schiff-base intermediate with substrate in the catalytic mechanism.

This sequence belongs to the transaldolase family. Type 1 subfamily. In terms of assembly, homodimer.

The protein localises to the cytoplasm. The enzyme catalyses D-sedoheptulose 7-phosphate + D-glyceraldehyde 3-phosphate = D-erythrose 4-phosphate + beta-D-fructose 6-phosphate. It participates in carbohydrate degradation; pentose phosphate pathway; D-glyceraldehyde 3-phosphate and beta-D-fructose 6-phosphate from D-ribose 5-phosphate and D-xylulose 5-phosphate (non-oxidative stage): step 2/3. Transaldolase is important for the balance of metabolites in the pentose-phosphate pathway. The chain is Transaldolase from Paracidovorax citrulli (strain AAC00-1) (Acidovorax citrulli).